The sequence spans 567 residues: MSHISRQAYADMFGPTVGDRVRLADTALWVEVEKDFTIYGEEVKFGGGKVIRDGMGQGQMLAAEAMDLVLTNALIIDHWGIVKADIGIKHGRIAVIGKAGNPDVQPGVNVPVGPGTEVIAAEGKIVTAGGVDSHIHFICPQQVDEALNSGVTTFIGGGTGPATGTNATTCTPGPWYLARMLQAADSLPINIGLLGKGNASRPDALREQIAAGAVGLKLHEDWGSTPAAIDCCLGVAEEMDIQVAIHTDTLNESGCIEDTLAAIGDRTIHTFHTEGAGGGHAPDIIRAAGQANVLPSSTNPTLPYTINTVDEHLDMLMVCHHLDPSIAEDVAFAESRIRRETIAAEDILHDMGAFAMTSSDSQAMGRVGEVVLRTWQVAHQMKLRRGPLAPDTPYSDNFRVKRYIAKYTINPALTHGIGHEVGSVEVGKLADLVLWSPAFFAVKPALVLKGGMIVTAPMGDINGSIPTPQPVHYRPMFGALGAARHATRMTFLPQAAMDRGLAEELNLRSLIGVVNGCRRVRKPDMVHNTLQPLIEVDAQTYQVRADGELLVCEPASELPLAQRYFLF.

Positions 129–567 constitute a Urease domain; that stretch reads GGVDSHIHFI…LPLAQRYFLF (439 aa). Ni(2+)-binding residues include histidine 134, histidine 136, and lysine 217. Lysine 217 is subject to N6-carboxylysine. Position 219 (histidine 219) interacts with substrate. 2 residues coordinate Ni(2+): histidine 246 and histidine 272. Histidine 320 acts as the Proton donor in catalysis. Aspartate 360 is a Ni(2+) binding site.

This sequence belongs to the metallo-dependent hydrolases superfamily. Urease alpha subunit family. In terms of assembly, heterotrimer of UreA (gamma), UreB (beta) and UreC (alpha) subunits. Three heterotrimers associate to form the active enzyme. Requires Ni cation as cofactor. Post-translationally, carboxylation allows a single lysine to coordinate two nickel ions.

The protein resides in the cytoplasm. The catalysed reaction is urea + 2 H2O + H(+) = hydrogencarbonate + 2 NH4(+). It functions in the pathway nitrogen metabolism; urea degradation; CO(2) and NH(3) from urea (urease route): step 1/1. In Pseudomonas putida (strain ATCC 47054 / DSM 6125 / CFBP 8728 / NCIMB 11950 / KT2440), this protein is Urease subunit alpha.